The following is a 372-amino-acid chain: Aminomethyltransferase (372 aa).

This sequence belongs to the GcvT family. As to quaternary structure, the glycine cleavage system is composed of four proteins: P, T, L and H.

It carries out the reaction N(6)-[(R)-S(8)-aminomethyldihydrolipoyl]-L-lysyl-[protein] + (6S)-5,6,7,8-tetrahydrofolate = N(6)-[(R)-dihydrolipoyl]-L-lysyl-[protein] + (6R)-5,10-methylene-5,6,7,8-tetrahydrofolate + NH4(+). In terms of biological role, the glycine cleavage system catalyzes the degradation of glycine. In Streptomyces coelicolor (strain ATCC BAA-471 / A3(2) / M145), this protein is Aminomethyltransferase.